The chain runs to 298 residues: (S)-ureidoglycine aminohydrolase (298 aa).

An N-terminal signal peptide occupies residues 1-20 (MRSLYLIVFIVISLVKASKS). The 67-residue stretch at 222–288 (TMDFQPGEFL…ALGKTRSRYL (67 aa)) folds into the Cupin type-2 domain. Residues Glu235, His237, His241, and Gln275 each coordinate Mn(2+). Position 235 (Glu235) interacts with substrate. Gln275, Tyr287, and Lys291 together coordinate substrate.

This sequence belongs to the UGHY family. As to quaternary structure, homooctamer. Requires Mn(2+) as cofactor.

The protein localises to the endoplasmic reticulum. The catalysed reaction is (S)-2-ureidoglycine + H2O = (S)-ureidoglycolate + NH4(+). Functionally, involved in the catabolism of purine nucleotides. Can use (S)-2-ureidoglycine as substrate, but not allantoate. The sequential activity of AAH, UGLYAH and UAH allows a complete purine breakdown without the intermediate generation of urea. In Arabidopsis thaliana (Mouse-ear cress), this protein is (S)-ureidoglycine aminohydrolase (UGLYAH).